The following is a 189-amino-acid chain: Probable UbiX-like flavin prenyltransferase (189 aa).

Residues 9–11, S36, 87–90, and R122 each bind FMN; these read GAS and SMKT.

The protein belongs to the UbiX/PAD1 family. YclB subfamily. Homododecamer.

The catalysed reaction is dimethylallyl phosphate + FMNH2 = prenylated FMNH2 + phosphate. Functionally, involved in the non-oxidative decarboxylation and detoxification of phenolic derivatives under anaerobic conditions. Flavin prenyltransferase that catalyzes the synthesis of the prenylated FMN cofactor (prenyl-FMN) for phenolic acid decarboxylase. The polypeptide is Probable UbiX-like flavin prenyltransferase (Sedimentibacter hydroxybenzoicus (Clostridium hydroxybenzoicum)).